Consider the following 320-residue polypeptide: Nicotianamine synthase 2 (320 aa).

The protein belongs to the nicotianamine synthase (NAS)-like family.

It carries out the reaction 3 S-adenosyl-L-methionine = nicotianamine + 3 S-methyl-5'-thioadenosine + 3 H(+). Functionally, synthesizes nicotianamine, a polyamine which serves as a sensor for the physiological iron status within the plant, and/or might be involved in the transport of iron. This chain is Nicotianamine synthase 2 (NAS2), found in Arabidopsis thaliana (Mouse-ear cress).